A 313-amino-acid chain; its full sequence is Protein sprouty homolog 1 (313 aa).

Position 1 is an N-acetylmethionine (Met1). Residues 43 to 152 form a disordered region; it reads QIKAIRGSNE…RSDRVIRTQP (110 aa). Residues 69-79 are compositionally biased toward basic and acidic residues; it reads PRPEKQERTHE. Low complexity predominate over residues 106–125; the sequence is SRSTSTGSAASSGSSSSVSS. An SPR domain is found at 177 to 289; sequence QCGKCKCGEC…CYDWTHRPGC (113 aa).

It belongs to the sprouty family. Forms heterodimers with SPRY2. Interacts with TESK1. Interacts with CAV1 (via C-terminus).

The protein resides in the cytoplasm. It localises to the membrane. In terms of biological role, inhibits fibroblast growth factor (FGF)-induced retinal lens fiber differentiation, probably by inhibiting FGF-mediated phosphorylation of ERK1/2. Inhibits TGFB-induced epithelial-to-mesenchymal transition in lens epithelial cells. This Mus musculus (Mouse) protein is Protein sprouty homolog 1 (Spry1).